Here is a 746-residue protein sequence, read N- to C-terminus: Exostosin-1 (746 aa).

Residues 1 to 7 (MQAKKRY) are Cytoplasmic-facing. Residues 8 to 28 (FILLSAGSCLALLFYFGGLQF) traverse the membrane as a helical; Signal-anchor for type II membrane protein segment. At 29–746 (RASRSHSRRE…RKKYRDIERL (718 aa)) the chain is on the lumenal side. N-linked (GlcNAc...) asparagine glycosylation is present at Asn89. Intrachain disulfides connect Cys98–Cys103 and Cys109–Cys152. A protein-binding residues include Leu166 and Tyr203. Residues Lys267, Lys269, Tyr271, and Arg280 each contribute to the UDP site. Residues Cys298 and Cys312 are joined by a disulfide bond. A protein is bound at residue His300. 2 residues coordinate UDP: Tyr319 and Tyr324. Asn330 carries N-linked (GlcNAc...) asparagine glycosylation. 2 disulfides stabilise this stretch: Cys334-Cys355 and Cys652-Cys704. Residues Arg346 and Glu349 each coordinate UDP.

The protein belongs to the glycosyltransferase 47 family. Part of the heparan sulfate polymerase, a dimeric complex composed of EXT1 and EXT2. Could also form homooligomeric complexes. Interacts with NDST1. N-glycosylated.

It is found in the golgi apparatus membrane. The protein localises to the golgi apparatus. It localises to the cis-Golgi network membrane. The protein resides in the endoplasmic reticulum membrane. It carries out the reaction 3-O-{alpha-D-GlcNAc-[(1-&gt;4)-beta-D-GlcA-(1-&gt;4)-alpha-D-GlcNAc](n)-(1-&gt;4)-beta-D-GlcA-(1-&gt;3)-beta-D-Gal-(1-&gt;3)-beta-D-Gal-(1-&gt;4)-beta-D-Xyl}-L-seryl-[protein] + UDP-alpha-D-glucuronate = 3-O-{[(1-&gt;4)-beta-D-GlcA-(1-&gt;4)-alpha-D-GlcNAc](n+1)-(1-&gt;4)-beta-D-GlcA-(1-&gt;3)-beta-D-Gal-(1-&gt;3)-beta-D-Gal-(1-&gt;4)-beta-D-Xyl}-L-seryl-[protein] + UDP + H(+). Its pathway is protein modification; protein glycosylation. Glycosyltransferase forming with EXT2 the heterodimeric heparan sulfate polymerase which catalyzes the elongation of the heparan sulfate glycan backbone. Glycan backbone extension consists in the alternating transfer of (1-&gt;4)-beta-D-GlcA and (1-&gt;4)-alpha-D-GlcNAc residues from their respective UDP-sugar donors. Both EXT1 and EXT2 are required for the full activity of the polymerase since EXT1 bears the N-acetylglucosaminyl-proteoglycan 4-beta-glucuronosyltransferase activity within the complex while EXT2 carries the glucuronosyl-N-acetylglucosaminyl-proteoglycan 4-alpha-N-acetylglucosaminyltransferase activity. Heparan sulfate proteoglycans are ubiquitous components of the extracellular matrix and play an important role in tissue homeostasis and signaling. This chain is Exostosin-1 (EXT1), found in Papio anubis (Olive baboon).